Consider the following 184-residue polypeptide: Alpha-tubulin N-acetyltransferase (184 aa).

The N-acetyltransferase domain occupies 1–170; it reads METFNHIDIK…NHFVIFSNYF (170 aa). Acetyl-CoA-binding positions include 104–117 and 140–149; these read FYILEKFQKRGLGI and SYKLQNFLKK.

The protein belongs to the acetyltransferase ATAT1 family.

It catalyses the reaction L-lysyl-[alpha-tubulin] + acetyl-CoA = N(6)-acetyl-L-lysyl-[alpha-tubulin] + CoA + H(+). Its function is as follows. Specifically acetylates 'Lys-40' in alpha-tubulin on the lumenal side of microtubules. Promotes microtubule destabilization and accelerates microtubule dynamics; this activity may be independent of acetylation activity. Acetylates alpha-tubulin with a slow enzymatic rate, due to a catalytic site that is not optimized for acetyl transfer. Enters the microtubule through each end and diffuses quickly throughout the lumen of microtubules. Acetylates only long/old microtubules because of its slow acetylation rate since it does not have time to act on dynamically unstable microtubules before the enzyme is released. The protein is Alpha-tubulin N-acetyltransferase of Plasmodium falciparum (isolate 3D7).